We begin with the raw amino-acid sequence, 437 residues long: tRNA modification GTPase MnmE (437 aa).

(6S)-5-formyl-5,6,7,8-tetrahydrofolate contacts are provided by arginine 21, glutamate 80, and arginine 120. In terms of domain architecture, TrmE-type G spans 218–361 (GFVVVLAGPP…LLDRVAAAAG (144 aa)). K(+) is bound at residue asparagine 228. Residues 228–233 (NAGKST), 247–253 (SPIPGTT), and 272–275 (DTAG) each bind GTP. Serine 232 is a Mg(2+) binding site. Serine 247, isoleucine 249, and threonine 252 together coordinate K(+). Residue threonine 253 coordinates Mg(2+). Residue lysine 437 participates in (6S)-5-formyl-5,6,7,8-tetrahydrofolate binding.

This sequence belongs to the TRAFAC class TrmE-Era-EngA-EngB-Septin-like GTPase superfamily. TrmE GTPase family. Homodimer. Heterotetramer of two MnmE and two MnmG subunits. K(+) is required as a cofactor.

It is found in the cytoplasm. Functionally, exhibits a very high intrinsic GTPase hydrolysis rate. Involved in the addition of a carboxymethylaminomethyl (cmnm) group at the wobble position (U34) of certain tRNAs, forming tRNA-cmnm(5)s(2)U34. In Methylobacterium sp. (strain 4-46), this protein is tRNA modification GTPase MnmE.